The primary structure comprises 441 residues: MYIGAKEYFPGIGKIGFEGRDSDNPLAFKVYDANKTIGDKTMAEHLRFAVAYWHSFCGNGADPFGPGTRAYPWDVGDTALNRAEAKADAAFEFFTKLGVPYYCFHDIDLSPDADDITEYESNLKHMVGVARQRQADTGIKLLWGTANLFSHPRYMNGASTNPDFNVVARAAVQVKAAIDATVALGGENYVFWGGREGYACLHNTQMKREQDNMARFLTLARDYGRSIGFKGNFLIEPKPMEPMKHQYDFDSATVIGFLRQHGLDQDFKLNIEANHATLSGHSFEHDLQVASDAGLLGSIDANRGNAQNGWDTDQFPTDLYDTVGAMLVVLRQGGLAPGGLNFDAKVRRESSDPQDLFLAHIGGMDAFARGLEVANALLTASPLEQWRAERYASFDSGAGADFAAGKTTLADLAKHAAGNAPQQISGRQEAYENLINQYLTR.

Catalysis depends on residues H105 and D108. E236, E272, H275, D300, D311, D313, and D343 together coordinate Mg(2+).

The protein belongs to the xylose isomerase family. Homotetramer. The cofactor is Mg(2+).

It is found in the cytoplasm. It carries out the reaction alpha-D-xylose = alpha-D-xylulofuranose. This chain is Xylose isomerase 1 (xylA1), found in Xanthomonas axonopodis pv. citri (strain 306).